Consider the following 174-residue polypeptide: Photosystem II repair protein PSB27-H1, chloroplastic (174 aa).

A disordered region spans residues M1–R35. The residue at position 94 (T94) is a Phosphothreonine. The residue at position 132 (Y132) is a Phosphotyrosine.

Belongs to the Psb27 family.

Its subcellular location is the plastid. It localises to the chloroplast thylakoid membrane. Functionally, probably involved in repair of photodamaged photosystem II (PSII). The polypeptide is Photosystem II repair protein PSB27-H1, chloroplastic (PSB27-1) (Arabidopsis thaliana (Mouse-ear cress)).